A 437-amino-acid polypeptide reads, in one-letter code: UDP-N-acetylmuramoylalanine--D-glutamate ligase (437 aa).

Position 115–121 (115–121) interacts with ATP; that stretch reads GSNGKST.

The protein belongs to the MurCDEF family.

The protein localises to the cytoplasm. The enzyme catalyses UDP-N-acetyl-alpha-D-muramoyl-L-alanine + D-glutamate + ATP = UDP-N-acetyl-alpha-D-muramoyl-L-alanyl-D-glutamate + ADP + phosphate + H(+). Its pathway is cell wall biogenesis; peptidoglycan biosynthesis. Cell wall formation. Catalyzes the addition of glutamate to the nucleotide precursor UDP-N-acetylmuramoyl-L-alanine (UMA). This chain is UDP-N-acetylmuramoylalanine--D-glutamate ligase, found in Vibrio parahaemolyticus serotype O3:K6 (strain RIMD 2210633).